The chain runs to 177 residues: 2''-aminoglycoside nucleotidyltransferase (177 aa).

Residues 1 to 92 (MDTTQVTLIH…ELLDCEPAWW (92 aa)) are N-terminal domain. Residues aspartate 44, aspartate 46, and aspartate 86 each coordinate Mg(2+). Aspartate 86 functions as the Proton acceptor in the catalytic mechanism. Residues 93–177 (ADEAYEIAEA…RAAFRSRYAA (85 aa)) are C-terminal domain. Alanine 100 is a kanamycin A binding site.

In terms of assembly, monomer. Mg(2+) serves as cofactor.

The catalysed reaction is nucleoside triphosphate + gentamicin = diphosphate + 2''-nucleotidylgentamicin.. Mediates bacterial resistance to kanamycin, gentamicin, dibekacin, sisomicin and tobramycin by adenylating the 2''-hydroxyl group of these antibiotics. The polypeptide is 2''-aminoglycoside nucleotidyltransferase (Klebsiella pneumoniae).